Here is a 555-residue protein sequence, read N- to C-terminus: CCR4-NOT transcription complex subunit 6-like (555 aa).

Residues 1-152 (MRLIGMPKEK…NLYQDPDGTR (152 aa)) form a required for interaction with CNOT1, CNOT3 and CNOT7 region. 4 LRR repeats span residues 57-78 (HLTALHLNDNYLSRIPPDIAKL), 80-101 (NLVYLDLSSNKLRSLPAELGNM), 103-125 (SLRELLLNNNLLRVLPYELGRLF), and 126-148 (QLQTLGLKGNPLSQDILNLYQDP). The nuclease domain stretch occupies residues 158-555 (MLDNLAVHPE…VNGVHLPNRR (398 aa)). Residue Glu240 participates in Mg(2+) binding. Positions 240, 276, 360, and 365 each coordinate substrate. Asp410 lines the Mg(2+) pocket. Residue Asp410 is the Proton donor/acceptor of the active site. Asn412, Asn479, and Phe484 together coordinate substrate.

The protein belongs to the CCR4/nocturin family. Component of the CCR4-NOT complex; distinct complexes seem to exist that differ in the participation of probably mutually exclusive catalytic subunits; the complex contains two deadenylase subunits, CNOT6 or CNOT6L, and CNOT7 or CNOT8. Interacts with CNOT1, CNOT3, CNOT7, CNOT8 and CNOT9. Interacts with TOB1. Interacts with NANOS2. Interacts with ZFP36. Interacts with ZFP36L2. Interacts with RBM46. Mg(2+) is required as a cofactor. As to expression, highly expressed in placenta, skeletal muscle, pancreas, testis and leukocytes. Weakly expressed in heart, spleen and thymus.

The protein resides in the cytoplasm. It localises to the nucleus. It catalyses the reaction Exonucleolytic cleavage of poly(A) to 5'-AMP.. With respect to regulation, inhibited by free AMP, and with lesser efficiency also by CMP, GMP, UMP, ATP and neomycin. Its function is as follows. Has 3'-5' poly(A) exoribonuclease activity for synthetic poly(A) RNA substrate. Catalytic component of the CCR4-NOT complex which is one of the major cellular mRNA deadenylases and is linked to various cellular processes including bulk mRNA degradation, miRNA-mediated repression, translational repression during translational initiation and general transcription regulation. Additional complex functions may be a consequence of its influence on mRNA expression. May be involved in the deadenylation-dependent degradation of mRNAs through the 3'-UTR AU-rich element-mediated mechanism. Involved in deadenylation-dependent degradation of CDKN1B mRNA. Its mRNA deadenylase activity can be inhibited by TOB1. Mediates cell proliferation and cell survival and prevents cellular senescence. The polypeptide is CCR4-NOT transcription complex subunit 6-like (CNOT6L) (Homo sapiens (Human)).